The following is a 1229-amino-acid chain: Nuclear envelope pore membrane protein POM 121C (1229 aa).

The segment covering 1–10 has biased composition (low complexity); sequence MSPAAAAAGA. A disordered region spans residues 1–24; it reads MSPAAAAAGAGERRRPIASVRDGR. The segment at 1-40 is cisternal side; the sequence is MSPAAAAAGAGERRRPIASVRDGRGRGCGGPAGAALLGLS. The required for targeting to the nucleus and nuclear pore complex stretch occupies residues 1–398; it reads MSPAAAAAGA…AITSSYSSTR (398 aa). A compositionally biased stretch (basic and acidic residues) spans 11–24; sequence GERRRPIASVRDGR. A helical membrane pass occupies residues 41 to 61; the sequence is LVGLLLYLVPAAAALAWLAVG. Positions 62 to 1229 are pore side; it reads TTAAWWGLSR…QARRQHTRKK (1168 aa). Position 81 is a phosphoserine (serine 81). Disordered stretches follow at residues 90–200, 296–507, 579–747, 936–966, and 1202–1229; these read RTLF…LPDR, KKKK…LGYS, KKMQ…TAPT, PLPS…ALTP, and PSFS…TRKK. Residues 155–166 show a composition bias toward pro residues; the sequence is ARPAPRSTPPSQ. Positions 176 to 189 are enriched in low complexity; it reads PSLPTPLLRPSGRP. Phosphoserine occurs at positions 322, 328, 348, 370, and 373. Residues 374–400 are compositionally biased toward polar residues; that stretch reads LTGAYTSGIPSSSRNAITSSYSSTRGI. Low complexity predominate over residues 409 to 422; the sequence is PSSSPFSSPASSRS. 2 stretches are compositionally biased toward basic and acidic residues: residues 427 to 439 and 449 to 463; these read RPAK…ELCH and ADKE…DTTP. Polar residues predominate over residues 468–479; the sequence is NSNSQSTPGSSG. The span at 612 to 629 shows a compositional bias: low complexity; sequence PPLGLSQSGPPGLLPSPS. A compositionally biased stretch (polar residues) spans 660–673; it reads QAETATKPQATSAP. Composition is skewed to low complexity over residues 689–703 and 726–747; these read SPSS…SASP and SVSA…TAPT. A compositionally biased stretch (basic residues) spans 1219–1229; the sequence is LQARRQHTRKK.

Belongs to the POM121 family.

It is found in the nucleus. The protein resides in the nuclear pore complex. Its subcellular location is the nucleus membrane. It localises to the endoplasmic reticulum membrane. Functionally, essential component of the nuclear pore complex (NPC). The repeat-containing domain may be involved in anchoring components of the pore complex to the pore membrane. When overexpressed in cells induces the formation of cytoplasmic annulate lamellae (AL). This Homo sapiens (Human) protein is Nuclear envelope pore membrane protein POM 121C (POM121C).